Consider the following 185-residue polypeptide: Elongation factor P (185 aa).

The protein belongs to the elongation factor P family.

It localises to the cytoplasm. The protein operates within protein biosynthesis; polypeptide chain elongation. Its function is as follows. Involved in peptide bond synthesis. Stimulates efficient translation and peptide-bond synthesis on native or reconstituted 70S ribosomes in vitro. Probably functions indirectly by altering the affinity of the ribosome for aminoacyl-tRNA, thus increasing their reactivity as acceptors for peptidyl transferase. This is Elongation factor P from Bacillus mycoides (strain KBAB4) (Bacillus weihenstephanensis).